The sequence spans 195 residues: Imidazoleglycerol-phosphate dehydratase (195 aa).

This sequence belongs to the imidazoleglycerol-phosphate dehydratase family.

The protein localises to the cytoplasm. The enzyme catalyses D-erythro-1-(imidazol-4-yl)glycerol 3-phosphate = 3-(imidazol-4-yl)-2-oxopropyl phosphate + H2O. It functions in the pathway amino-acid biosynthesis; L-histidine biosynthesis; L-histidine from 5-phospho-alpha-D-ribose 1-diphosphate: step 6/9. This chain is Imidazoleglycerol-phosphate dehydratase, found in Geobacter metallireducens (strain ATCC 53774 / DSM 7210 / GS-15).